The sequence spans 151 residues: Large ribosomal subunit protein bL9 (151 aa).

It belongs to the bacterial ribosomal protein bL9 family.

In terms of biological role, binds to the 23S rRNA. The chain is Large ribosomal subunit protein bL9 from Pelobacter propionicus (strain DSM 2379 / NBRC 103807 / OttBd1).